The chain runs to 313 residues: Ribosomal RNA small subunit methyltransferase H (313 aa).

Residues 35 to 37, aspartate 55, phenylalanine 80, aspartate 102, and glutamine 109 contribute to the S-adenosyl-L-methionine site; that span reads GGH.

Belongs to the methyltransferase superfamily. RsmH family.

Its subcellular location is the cytoplasm. The enzyme catalyses cytidine(1402) in 16S rRNA + S-adenosyl-L-methionine = N(4)-methylcytidine(1402) in 16S rRNA + S-adenosyl-L-homocysteine + H(+). Its function is as follows. Specifically methylates the N4 position of cytidine in position 1402 (C1402) of 16S rRNA. This Shewanella sp. (strain MR-4) protein is Ribosomal RNA small subunit methyltransferase H.